We begin with the raw amino-acid sequence, 503 residues long: Aminoaldehyde dehydrogenase 2, peroxisomal (503 aa).

Residues Ile28, Asp99, and Leu189 each coordinate Na(+). Position 238-245 (238-245 (GSTMTGSK)) interacts with NAD(+). The active-site Proton acceptor is the Glu260. Positions 294 and 393 each coordinate NAD(+). The active-site Nucleophile is Cys294. A Microbody targeting signal motif is present at residues 501-503 (SKL).

The protein belongs to the aldehyde dehydrogenase family. Expressed in leaves, flowers and fruits.

The protein localises to the peroxisome. It carries out the reaction 4-aminobutanal + NAD(+) + H2O = 4-aminobutanoate + NADH + 2 H(+). The catalysed reaction is 3-aminopropanal + NAD(+) + H2O = beta-alanine + NADH + 2 H(+). It functions in the pathway amine and polyamine biosynthesis; betaine biosynthesis via choline pathway; betaine from betaine aldehyde: step 1/1. Its function is as follows. Dehydrogenase that catalyzes the oxidation of several aminoaldehydes. Metabolizes and detoxifies aldehyde products of polyamine degradation to non-toxic amino acids. Catalyzes the oxidation of 4-aminobutanal and 3-aminopropanal to 4-aminobutanoate and beta-alanine, respectively. In Malus domestica (Apple), this protein is Aminoaldehyde dehydrogenase 2, peroxisomal.